We begin with the raw amino-acid sequence, 150 residues long: uncharacterized protein (150 aa).

A signal peptide spans 1–21; sequence MAMEMAMMGLLGTVVGASAMG.

This is an uncharacterized protein from Mycobacterium tuberculosis (strain CDC 1551 / Oshkosh).